A 194-amino-acid polypeptide reads, in one-letter code: Peptidyl-tRNA hydrolase (194 aa).

A tRNA-binding site is contributed by tyrosine 17. The active-site Proton acceptor is the histidine 22. TRNA-binding residues include phenylalanine 68, asparagine 70, and asparagine 116.

The protein belongs to the PTH family. Monomer.

The protein localises to the cytoplasm. The catalysed reaction is an N-acyl-L-alpha-aminoacyl-tRNA + H2O = an N-acyl-L-amino acid + a tRNA + H(+). In terms of biological role, hydrolyzes ribosome-free peptidyl-tRNAs (with 1 or more amino acids incorporated), which drop off the ribosome during protein synthesis, or as a result of ribosome stalling. Functionally, catalyzes the release of premature peptidyl moieties from peptidyl-tRNA molecules trapped in stalled 50S ribosomal subunits, and thus maintains levels of free tRNAs and 50S ribosomes. This is Peptidyl-tRNA hydrolase from Histophilus somni (strain 129Pt) (Haemophilus somnus).